The sequence spans 488 residues: Erythromycin resistance ATP-binding protein MsrA (488 aa).

Residues 6-199 (IKFNQINHKL…NQYEQEQLEQ (194 aa)) form the ABC transporter 1 domain. 38–45 (GGNGTGKT) contacts ATP. The Q-linker, rich in Glu and hydrophilic AA stretch occupies residues 200–298 (QRKYEQYISE…KIYDIHNNYP (99 aa)). The tract at residues 211–255 (QRLSQASKAKRNQAQQMAQASSKQKNKSIAPDRLSASKEKGTVEK) is disordered. Residues 222–233 (NQAQQMAQASSK) are compositionally biased toward low complexity. The span at 245-255 (SASKEKGTVEK) shows a compositional bias: basic and acidic residues. The region spanning 299-487 (IIAQNLTLVK…ELTGQSIHDI (189 aa)) is the ABC transporter 2 domain. Residue 331–338 (GANGVGKT) participates in ATP binding.

It belongs to the ABC transporter superfamily.

Its function is as follows. Confers resistance to 14-membered ring macrolides (like erythromycin) and to B streptogramins, by acting as an ATP-dependent efflux pump. The sequence is that of Erythromycin resistance ATP-binding protein MsrA (msrA) from Staphylococcus epidermidis.